The sequence spans 552 residues: Membrane protein insertase YidC (552 aa).

5 consecutive transmembrane segments (helical) span residues 7-24, 364-384, 434-454, 473-493, and 508-528; these read VLWV…DNWQ, WGWA…PLSA, LPVV…LASV, PFFI…SLNP, and PIAF…YYVV.

This sequence belongs to the OXA1/ALB3/YidC family. Type 1 subfamily. Interacts with the Sec translocase complex via SecD. Specifically interacts with transmembrane segments of nascent integral membrane proteins during membrane integration.

Its subcellular location is the cell inner membrane. In terms of biological role, required for the insertion and/or proper folding and/or complex formation of integral membrane proteins into the membrane. Involved in integration of membrane proteins that insert both dependently and independently of the Sec translocase complex, as well as at least some lipoproteins. Aids folding of multispanning membrane proteins. This is Membrane protein insertase YidC from Burkholderia cenocepacia (strain HI2424).